We begin with the raw amino-acid sequence, 190 residues long: Small ribosomal subunit protein eS7 (190 aa).

It belongs to the eukaryotic ribosomal protein eS7 family.

This chain is Small ribosomal subunit protein eS7 (RpS7), found in Manduca sexta (Tobacco hawkmoth).